The sequence spans 137 residues: Large ribosomal subunit protein uL16 (137 aa).

This sequence belongs to the universal ribosomal protein uL16 family. As to quaternary structure, part of the 50S ribosomal subunit.

Its function is as follows. Binds 23S rRNA and is also seen to make contacts with the A and possibly P site tRNAs. The sequence is that of Large ribosomal subunit protein uL16 from Streptococcus sanguinis (strain SK36).